The following is a 93-amino-acid chain: UPF0367 protein gsr3177 (93 aa).

The protein belongs to the UPF0367 family.

The protein is UPF0367 protein gsr3177 of Gloeobacter violaceus (strain ATCC 29082 / PCC 7421).